Consider the following 264-residue polypeptide: H-2 class II histocompatibility antigen, E-D beta chain (264 aa).

The first 31 residues, 1-31 (MVWLPRVPCVAAVILLLTVLSPPVALVRDTR), serve as a signal peptide directing secretion. The beta-1 stretch occupies residues 32 to 121 (PRFLEYVTSE…ISDKFLVRRR (90 aa)). Residues 32–225 (PRFLEYVTSE…KAQSTSAQNK (194 aa)) lie on the Extracellular side of the membrane. 2 disulfides stabilise this stretch: Cys42-Cys106 and Cys144-Cys200. N-linked (GlcNAc...) asparagine glycosylation occurs at Asn46. The segment at 122–215 (VEPTVTVYPT…SLTDPVTVEW (94 aa)) is beta-2. In terms of domain architecture, Ig-like C1-type spans 124–214 (PTVTVYPTKT…PSLTDPVTVE (91 aa)). The interval 216–225 (KAQSTSAQNK) is connecting peptide. A helical transmembrane segment spans residues 226–248 (MLSGVGGFVLGLLFLGAGLFIYF). The Cytoplasmic portion of the chain corresponds to 249–264 (RNQKGQSGLQPTGLLS).

It belongs to the MHC class II family.

Its subcellular location is the membrane. The polypeptide is H-2 class II histocompatibility antigen, E-D beta chain (Mus musculus (Mouse)).